We begin with the raw amino-acid sequence, 227 residues long: UPF0173 metal-dependent hydrolase BCAH187_A4741 (227 aa).

The protein belongs to the UPF0173 family.

The sequence is that of UPF0173 metal-dependent hydrolase BCAH187_A4741 from Bacillus cereus (strain AH187).